Reading from the N-terminus, the 315-residue chain is 4-hydroxy-3-methylbut-2-enyl diphosphate reductase (315 aa).

Residue cysteine 12 coordinates [4Fe-4S] cluster. The (2E)-4-hydroxy-3-methylbut-2-enyl diphosphate site is built by histidine 40 and histidine 74. The dimethylallyl diphosphate site is built by histidine 40 and histidine 74. Isopentenyl diphosphate-binding residues include histidine 40 and histidine 74. Position 96 (cysteine 96) interacts with [4Fe-4S] cluster. Residue histidine 124 participates in (2E)-4-hydroxy-3-methylbut-2-enyl diphosphate binding. Histidine 124 serves as a coordination point for dimethylallyl diphosphate. Histidine 124 provides a ligand contact to isopentenyl diphosphate. Glutamate 126 (proton donor) is an active-site residue. A (2E)-4-hydroxy-3-methylbut-2-enyl diphosphate-binding site is contributed by threonine 167. Cysteine 213 is a [4Fe-4S] cluster binding site. Residues serine 241, serine 242, asparagine 243, and serine 290 each contribute to the (2E)-4-hydroxy-3-methylbut-2-enyl diphosphate site. Positions 241, 242, 243, and 290 each coordinate dimethylallyl diphosphate. Isopentenyl diphosphate contacts are provided by serine 241, serine 242, asparagine 243, and serine 290.

It belongs to the IspH family. The cofactor is [4Fe-4S] cluster.

It carries out the reaction isopentenyl diphosphate + 2 oxidized [2Fe-2S]-[ferredoxin] + H2O = (2E)-4-hydroxy-3-methylbut-2-enyl diphosphate + 2 reduced [2Fe-2S]-[ferredoxin] + 2 H(+). The catalysed reaction is dimethylallyl diphosphate + 2 oxidized [2Fe-2S]-[ferredoxin] + H2O = (2E)-4-hydroxy-3-methylbut-2-enyl diphosphate + 2 reduced [2Fe-2S]-[ferredoxin] + 2 H(+). The protein operates within isoprenoid biosynthesis; dimethylallyl diphosphate biosynthesis; dimethylallyl diphosphate from (2E)-4-hydroxy-3-methylbutenyl diphosphate: step 1/1. Its pathway is isoprenoid biosynthesis; isopentenyl diphosphate biosynthesis via DXP pathway; isopentenyl diphosphate from 1-deoxy-D-xylulose 5-phosphate: step 6/6. Catalyzes the conversion of 1-hydroxy-2-methyl-2-(E)-butenyl 4-diphosphate (HMBPP) into a mixture of isopentenyl diphosphate (IPP) and dimethylallyl diphosphate (DMAPP). Acts in the terminal step of the DOXP/MEP pathway for isoprenoid precursor biosynthesis. The polypeptide is 4-hydroxy-3-methylbut-2-enyl diphosphate reductase (Chloroherpeton thalassium (strain ATCC 35110 / GB-78)).